The primary structure comprises 472 residues: Cysteine--tRNA ligase (472 aa).

Cys-28 contributes to the Zn(2+) binding site. The short motif at 30-40 (PTVYDYTHIGH) is the 'HIGH' region element. Zn(2+)-binding residues include Cys-207, His-232, and Glu-236. The 'KMSKS' region signature appears at 264-268 (KMSKS). An ATP-binding site is contributed by Lys-267.

This sequence belongs to the class-I aminoacyl-tRNA synthetase family. Zn(2+) is required as a cofactor.

The protein resides in the cytoplasm. The enzyme catalyses tRNA(Cys) + L-cysteine + ATP = L-cysteinyl-tRNA(Cys) + AMP + diphosphate. The chain is Cysteine--tRNA ligase (cysS) from Aeropyrum pernix (strain ATCC 700893 / DSM 11879 / JCM 9820 / NBRC 100138 / K1).